Consider the following 317-residue polypeptide: MPIKIPDDLPARPILEQEGVVVMRRTDAVRQDIRPLRIGLLNLMPNKISTETQLARLLGATPLQVELTLVRMTDHVARHTPADHMAAFYRPWAEVRDERFDGFVITGAPVEHLPFEEVGYWPELCRVLDWTQTHVHSSFTICWAAQAALHHFHGVPKHLLPAKAFGLFRHRNLAPASPYLRGFSDDPHIPVSRWAEIRQADIPAGSGLETLLDSAETGPCLLDDPAHRSLHMFNHVEYDTRSLADEYFRDGQGPLPAGYFPGDDPARPPENRWRGHAHLLFGNWINEIYRTTPFDIAAIGGGRPPANDAGPIEAAAG.

The Acyl-thioester intermediate role is filled by C142. The substrate site is built by K163 and S192. H235 functions as the Proton acceptor in the catalytic mechanism. E237 is an active-site residue. R249 is a binding site for substrate.

The protein belongs to the MetA family.

Its subcellular location is the cytoplasm. It catalyses the reaction L-homoserine + acetyl-CoA = O-acetyl-L-homoserine + CoA. The protein operates within amino-acid biosynthesis; L-methionine biosynthesis via de novo pathway; O-acetyl-L-homoserine from L-homoserine: step 1/1. Its function is as follows. Transfers an acetyl group from acetyl-CoA to L-homoserine, forming acetyl-L-homoserine. The chain is Homoserine O-acetyltransferase from Rhizorhabdus wittichii (strain DSM 6014 / CCUG 31198 / JCM 15750 / NBRC 105917 / EY 4224 / RW1) (Sphingomonas wittichii).